The following is a 512-amino-acid chain: Maturase K (512 aa).

Belongs to the intron maturase 2 family. MatK subfamily.

Its subcellular location is the plastid. It is found in the chloroplast. Functionally, usually encoded in the trnK tRNA gene intron. Probably assists in splicing its own and other chloroplast group II introns. The chain is Maturase K from Soldanella alpina (Alpine snowbell).